A 115-amino-acid polypeptide reads, in one-letter code: Holo-[acyl-carrier-protein] synthase (115 aa).

Aspartate 8 and glutamate 50 together coordinate Mg(2+).

This sequence belongs to the P-Pant transferase superfamily. AcpS family. Requires Mg(2+) as cofactor.

The protein resides in the cytoplasm. The catalysed reaction is apo-[ACP] + CoA = holo-[ACP] + adenosine 3',5'-bisphosphate + H(+). In terms of biological role, transfers the 4'-phosphopantetheine moiety from coenzyme A to a Ser of acyl-carrier-protein. This is Holo-[acyl-carrier-protein] synthase from Arthrobacter sp. (strain FB24).